Here is a 67-residue protein sequence, read N- to C-terminus: Probable Sec-independent protein translocase protein TatE (67 aa).

Residues 4–21 (ISITKLLVVAALVVLLFG) form a helical membrane-spanning segment.

It belongs to the TatA/E family. TatE subfamily.

The protein resides in the cell inner membrane. In terms of biological role, part of the twin-arginine translocation (Tat) system that transports large folded proteins containing a characteristic twin-arginine motif in their signal peptide across membranes. TatE shares overlapping functions with TatA. The sequence is that of Probable Sec-independent protein translocase protein TatE from Salmonella arizonae (strain ATCC BAA-731 / CDC346-86 / RSK2980).